The sequence spans 332 residues: Anthranilate phosphoribosyltransferase (332 aa).

5-phospho-alpha-D-ribose 1-diphosphate contacts are provided by residues glycine 79, 82 to 83 (GD), threonine 87, 89 to 92 (NIST), 107 to 115 (KHGNYGATS), and alanine 119. Residue glycine 79 participates in anthranilate binding. Serine 91 provides a ligand contact to Mg(2+). Residue asparagine 110 coordinates anthranilate. Arginine 165 is a binding site for anthranilate. Positions 223 and 224 each coordinate Mg(2+).

The protein belongs to the anthranilate phosphoribosyltransferase family. Homodimer. The cofactor is Mg(2+).

The catalysed reaction is N-(5-phospho-beta-D-ribosyl)anthranilate + diphosphate = 5-phospho-alpha-D-ribose 1-diphosphate + anthranilate. The protein operates within amino-acid biosynthesis; L-tryptophan biosynthesis; L-tryptophan from chorismate: step 2/5. Catalyzes the transfer of the phosphoribosyl group of 5-phosphorylribose-1-pyrophosphate (PRPP) to anthranilate to yield N-(5'-phosphoribosyl)-anthranilate (PRA). The chain is Anthranilate phosphoribosyltransferase from Bacteroides thetaiotaomicron (strain ATCC 29148 / DSM 2079 / JCM 5827 / CCUG 10774 / NCTC 10582 / VPI-5482 / E50).